Consider the following 255-residue polypeptide: 5-oxoprolinase subunit A (255 aa).

Belongs to the LamB/PxpA family. As to quaternary structure, forms a complex composed of PxpA, PxpB and PxpC.

It carries out the reaction 5-oxo-L-proline + ATP + 2 H2O = L-glutamate + ADP + phosphate + H(+). Catalyzes the cleavage of 5-oxoproline to form L-glutamate coupled to the hydrolysis of ATP to ADP and inorganic phosphate. The sequence is that of 5-oxoprolinase subunit A from Campylobacter jejuni subsp. doylei (strain ATCC BAA-1458 / RM4099 / 269.97).